The chain runs to 429 residues: D-amino acid dehydrogenase 1 (429 aa).

Residue 3–17 participates in FAD binding; it reads VLVLGSGVIGVTSAY.

The protein belongs to the DadA oxidoreductase family. It depends on FAD as a cofactor.

It carries out the reaction a D-alpha-amino acid + A + H2O = a 2-oxocarboxylate + AH2 + NH4(+). In terms of biological role, oxidative deamination of D-amino acids. In Ralstonia nicotianae (strain ATCC BAA-1114 / GMI1000) (Ralstonia solanacearum), this protein is D-amino acid dehydrogenase 1 (dadA1).